The following is a 599-amino-acid chain: Pentatricopeptide repeat-containing protein At3g62470, mitochondrial (599 aa).

A mitochondrion-targeting transit peptide spans 1 to 99 (MAAAPWLHLS…RGFSSGSSNV (99 aa)). PPR repeat units follow at residues 194-228 (DSRT…GLLT), 230-262 (ETFT…KFKI), 263-293 (GVET…LKER), 297-331 (NMMT…GLKP), 332-366 (DIVA…GPCP), 367-401 (NVRS…GLQP), 402-436 (DAAV…GHPP), 437-471 (DGKT…EIEP), 472-506 (SIHT…GICP), and 507-541 (DDNS…GMKT).

Belongs to the PPR family. P subfamily.

It is found in the mitochondrion. The protein is Pentatricopeptide repeat-containing protein At3g62470, mitochondrial of Arabidopsis thaliana (Mouse-ear cress).